Consider the following 923-residue polypeptide: Isoleucine--tRNA ligase (923 aa).

A 'HIGH' region motif is present at residues 57–67 (PYANGDIHMGH). Position 553 (glutamate 553) interacts with L-isoleucyl-5'-AMP. The 'KMSKS' region motif lies at 594-598 (KMSKS). An ATP-binding site is contributed by lysine 597. Zn(2+) is bound by residues cysteine 888, cysteine 891, cysteine 908, and cysteine 911.

Belongs to the class-I aminoacyl-tRNA synthetase family. IleS type 1 subfamily. As to quaternary structure, monomer. Zn(2+) is required as a cofactor.

It is found in the cytoplasm. The catalysed reaction is tRNA(Ile) + L-isoleucine + ATP = L-isoleucyl-tRNA(Ile) + AMP + diphosphate. Catalyzes the attachment of isoleucine to tRNA(Ile). As IleRS can inadvertently accommodate and process structurally similar amino acids such as valine, to avoid such errors it has two additional distinct tRNA(Ile)-dependent editing activities. One activity is designated as 'pretransfer' editing and involves the hydrolysis of activated Val-AMP. The other activity is designated 'posttransfer' editing and involves deacylation of mischarged Val-tRNA(Ile). This is Isoleucine--tRNA ligase from Shouchella clausii (strain KSM-K16) (Alkalihalobacillus clausii).